The chain runs to 328 residues: Peroxisomal adenine nucleotide transporter 1 (328 aa).

The next 6 membrane-spanning stretches (helical) occupy residues 1–21 (MLTL…NIAV), 78–98 (TVTT…YTFI), 128–148 (LVLG…MAVV), 185–202 (LRTG…YASF), 226–246 (FILG…LIVA), and 277–297 (WKGV…LFAF). Solcar repeat units follow at residues 1–101 (MLTL…IRKS), 122–208 (PSTI…LKEV), and 220–304 (LSAV…LTKS).

The protein belongs to the mitochondrial carrier (TC 2.A.29) family.

It localises to the peroxisome membrane. Adenine nucleotide transporter involved in the uniport of ATP and adenine nucleotide hetero-exchange transport between the cytosol and the peroxisomal lumen. This transport is accompanied by a proton transport from the peroxisomal lumen to the cytosol. Transport of ATP into the peroxisome is required for beta-oxidation of medium-chain fatty acids. Required for growth on medium-chain fatty acids, pH gradient formation in peroxisomes and for normal peroxisome proliferation. This chain is Peroxisomal adenine nucleotide transporter 1 (ANT1), found in Saccharomyces cerevisiae (strain ATCC 204508 / S288c) (Baker's yeast).